We begin with the raw amino-acid sequence, 640 residues long: Threonine--tRNA ligase (640 aa).

One can recognise a TGS domain in the interval 1-61 (MPTITLPDGS…ACDADVTIIT (61 aa)). The interval 243 to 534 (DHRKIGKALD…LIEQYAGNMP (292 aa)) is catalytic. Cys-334, His-385, and His-511 together coordinate Zn(2+).

The protein belongs to the class-II aminoacyl-tRNA synthetase family. As to quaternary structure, homodimer. Requires Zn(2+) as cofactor.

The protein resides in the cytoplasm. It catalyses the reaction tRNA(Thr) + L-threonine + ATP = L-threonyl-tRNA(Thr) + AMP + diphosphate + H(+). Catalyzes the attachment of threonine to tRNA(Thr) in a two-step reaction: L-threonine is first activated by ATP to form Thr-AMP and then transferred to the acceptor end of tRNA(Thr). Also edits incorrectly charged L-seryl-tRNA(Thr). The chain is Threonine--tRNA ligase from Dichelobacter nodosus (strain VCS1703A).